Reading from the N-terminus, the 425-residue chain is COBRA-like protein 4 (425 aa).

Positions 1-27 (MAIGVGGCCAVLLAAALLFSSPATTYA) are cleaved as a signal peptide. N-linked (GlcNAc...) asparagine glycans are attached at residues Asn36, Asn163, Asn171, Asn319, and Asn352.

The protein belongs to the COBRA family.

The protein is COBRA-like protein 4 (BC1L9) of Oryza sativa subsp. japonica (Rice).